Here is a 245-residue protein sequence, read N- to C-terminus: MRVGVLGAKGKVGATMVQAVEAADDLTFTTGVDAGDPLSALVDTRTDVVIDFTHPSVVMDNLKFLIDNGIHAVVGTTGFTDERISQVQDWLADKPESAVLIAPNFAIGAVLSMHFAQQAARFFESVEVIELHHPHKADAPSGTAARTAKLIAAARKDMPPNPDATSTGLEGARGADVDGIPVHSIRLAGLVAHQEVLFGTQGETLTIRHDSLDRTSFVPGVLLAVRKVSERPGLTVGIEPLLDLT.

NAD(+)-binding positions include 7-12 (GAKGKV), 75-77 (GTT), and 102-105 (APNF). His-132 functions as the Proton donor/acceptor in the catalytic mechanism. His-133 contacts (S)-2,3,4,5-tetrahydrodipicolinate. Lys-136 acts as the Proton donor in catalysis. 142-143 (GT) is a (S)-2,3,4,5-tetrahydrodipicolinate binding site.

It belongs to the DapB family.

It localises to the cytoplasm. The enzyme catalyses (S)-2,3,4,5-tetrahydrodipicolinate + NAD(+) + H2O = (2S,4S)-4-hydroxy-2,3,4,5-tetrahydrodipicolinate + NADH + H(+). It catalyses the reaction (S)-2,3,4,5-tetrahydrodipicolinate + NADP(+) + H2O = (2S,4S)-4-hydroxy-2,3,4,5-tetrahydrodipicolinate + NADPH + H(+). It participates in amino-acid biosynthesis; L-lysine biosynthesis via DAP pathway; (S)-tetrahydrodipicolinate from L-aspartate: step 4/4. Its function is as follows. Catalyzes the conversion of 4-hydroxy-tetrahydrodipicolinate (HTPA) to tetrahydrodipicolinate. This Mycobacterium sp. (strain KMS) protein is 4-hydroxy-tetrahydrodipicolinate reductase.